A 953-amino-acid chain; its full sequence is Eukaryotic translation initiation factor 3 subunit A (953 aa).

The region spanning 323–504 is the PCI domain; the sequence is LQKMASHVLL…KSISFGLDLH (182 aa). Coiled coils occupy residues 593–642, 670–704, and 732–877; these read QERE…KRQA, MNAD…VDYF, and ENQE…LEER. The tract at residues 603–623 is disordered; that stretch reads IKKQKVENQEAEQKRLDEERR. Disordered regions lie at residues 810 to 861 and 893 to 953; these read ERKK…EIDR and GWGD…ITMS. Composition is skewed to basic and acidic residues over residues 812–861, 895–919, and 928–953; these read KKIE…EIDR, GDHE…RGGD, and WQRE…ITMS.

Belongs to the eIF-3 subunit A family. As to quaternary structure, component of the eukaryotic translation initiation factor 3 (eIF-3) complex.

Its subcellular location is the cytoplasm. In terms of biological role, RNA-binding component of the eukaryotic translation initiation factor 3 (eIF-3) complex, which is involved in protein synthesis of a specialized repertoire of mRNAs and, together with other initiation factors, stimulates binding of mRNA and methionyl-tRNAi to the 40S ribosome. The eIF-3 complex specifically targets and initiates translation of a subset of mRNAs involved in cell proliferation. The chain is Eukaryotic translation initiation factor 3 subunit A from Nematostella vectensis (Starlet sea anemone).